Here is a 228-residue protein sequence, read N- to C-terminus: Deoxyribose-phosphate aldolase (228 aa).

Residue Asp-93 is the Proton donor/acceptor of the active site. Lys-159 functions as the Schiff-base intermediate with acetaldehyde in the catalytic mechanism. Residue Lys-188 is the Proton donor/acceptor of the active site.

Belongs to the DeoC/FbaB aldolase family. DeoC type 1 subfamily.

The protein localises to the cytoplasm. The enzyme catalyses 2-deoxy-D-ribose 5-phosphate = D-glyceraldehyde 3-phosphate + acetaldehyde. Its pathway is carbohydrate degradation; 2-deoxy-D-ribose 1-phosphate degradation; D-glyceraldehyde 3-phosphate and acetaldehyde from 2-deoxy-alpha-D-ribose 1-phosphate: step 2/2. In terms of biological role, catalyzes a reversible aldol reaction between acetaldehyde and D-glyceraldehyde 3-phosphate to generate 2-deoxy-D-ribose 5-phosphate. This is Deoxyribose-phosphate aldolase from Carboxydothermus hydrogenoformans (strain ATCC BAA-161 / DSM 6008 / Z-2901).